The sequence spans 119 residues: Large ribosomal subunit protein uL18 (119 aa).

Belongs to the universal ribosomal protein uL18 family. As to quaternary structure, part of the 50S ribosomal subunit; part of the 5S rRNA/L5/L18/L25 subcomplex. Contacts the 5S and 23S rRNAs.

In terms of biological role, this is one of the proteins that bind and probably mediate the attachment of the 5S RNA into the large ribosomal subunit, where it forms part of the central protuberance. The protein is Large ribosomal subunit protein uL18 of Clostridium botulinum (strain Okra / Type B1).